The primary structure comprises 244 residues: Uridylate kinase (244 aa).

15–18 (KLSG) contributes to the ATP binding site. The involved in allosteric activation by GTP stretch occupies residues 23–28 (GSEGFG). Glycine 57 provides a ligand contact to UMP. The ATP site is built by glycine 58 and arginine 62. Residues aspartate 77 and 138-145 (TGNPFFTT) each bind UMP. Threonine 165, phenylalanine 171, and aspartate 174 together coordinate ATP.

It belongs to the UMP kinase family. In terms of assembly, homohexamer.

The protein resides in the cytoplasm. The enzyme catalyses UMP + ATP = UDP + ADP. The protein operates within pyrimidine metabolism; CTP biosynthesis via de novo pathway; UDP from UMP (UMPK route): step 1/1. Allosterically activated by GTP. Inhibited by UTP. Its function is as follows. Catalyzes the reversible phosphorylation of UMP to UDP. This chain is Uridylate kinase, found in Aeromonas salmonicida (strain A449).